The following is a 282-amino-acid chain: Deoxyribonuclease-1 (282 aa).

The first 22 residues, 1–22 (MRGTRLMGLLLALAGLLQLGLS), serve as a signal peptide directing secretion. Asparagine 40 is a glycosylation site (N-linked (GlcNAc...) asparagine). The active site involves glutamate 100. An intrachain disulfide couples cysteine 123 to cysteine 126. Histidine 156 is an active-site residue. A disulfide bridge links cysteine 195 with cysteine 231.

It belongs to the DNase I family. The cofactor is Ca(2+). Mg(2+) serves as cofactor. The only differences between the A and B forms and the C and D forms are in the compositions of the carbohydrate bound to Asn-40.

The protein resides in the secreted. The protein localises to the zymogen granule. It is found in the nucleus envelope. The catalysed reaction is Endonucleolytic cleavage to 5'-phosphodinucleotide and 5'-phosphooligonucleotide end-products.. In terms of biological role, serum endocuclease secreted into body fluids by a wide variety of exocrine and endocrine organs. Expressed by non-hematopoietic tissues and preferentially cleaves protein-free DNA. Among other functions, seems to be involved in cell death by apoptosis. Binds specifically to G-actin and blocks actin polymerization. Together with DNASE1L3, plays a key role in degrading neutrophil extracellular traps (NETs). NETs are mainly composed of DNA fibers and are released by neutrophils to bind pathogens during inflammation. Degradation of intravascular NETs by DNASE1 and DNASE1L3 is required to prevent formation of clots that obstruct blood vessels and cause organ damage following inflammation. The sequence is that of Deoxyribonuclease-1 (DNASE1) from Bos taurus (Bovine).